The following is a 198-amino-acid chain: ATP-dependent Clp protease proteolytic subunit (198 aa).

The active-site Nucleophile is S103. H128 is an active-site residue.

It belongs to the peptidase S14 family. Fourteen ClpP subunits assemble into 2 heptameric rings which stack back to back to give a disk-like structure with a central cavity, resembling the structure of eukaryotic proteasomes.

It is found in the cytoplasm. The enzyme catalyses Hydrolysis of proteins to small peptides in the presence of ATP and magnesium. alpha-casein is the usual test substrate. In the absence of ATP, only oligopeptides shorter than five residues are hydrolyzed (such as succinyl-Leu-Tyr-|-NHMec, and Leu-Tyr-Leu-|-Tyr-Trp, in which cleavage of the -Tyr-|-Leu- and -Tyr-|-Trp bonds also occurs).. Functionally, cleaves peptides in various proteins in a process that requires ATP hydrolysis. Has a chymotrypsin-like activity. Plays a major role in the degradation of misfolded proteins. The polypeptide is ATP-dependent Clp protease proteolytic subunit (Ruthia magnifica subsp. Calyptogena magnifica).